Here is a 746-residue protein sequence, read N- to C-terminus: Taurocyamine kinase (746 aa).

2 Approximate repeats span residues Met-31–Val-393 and Met-394–His-705. The Phosphagen kinase N-terminal 1 domain occupies Ser-35–Lys-116. Residues Leu-146–Leu-382 form the Phosphagen kinase C-terminal 1 domain. Residues Ser-149–Arg-153, His-212, and Arg-256 contribute to the ATP site. Cys-298 is an active-site residue. Residues Arg-307–His-311 and Arg-335–Glu-340 each bind ATP. A Phosphagen kinase N-terminal 2 domain is found at Pro-398–Gly-479. Positions Phe-509–Leu-746 constitute a Phosphagen kinase C-terminal 2 domain. ATP is bound by residues Ser-512–Arg-516, His-575, and Arg-619. Cys-661 is an active-site residue. ATP is bound by residues Arg-670–Leu-674 and Arg-699–Glu-704.

Belongs to the ATP:guanido phosphotransferase family. It depends on Mg(2+) as a cofactor.

It carries out the reaction taurocyamine + ATP = N-phosphotaurocyamine + ADP + H(+). Functionally, this family of enzymes reversibly catalyzes the transfer of phosphate between ATP and various phosphogens (e.g. creatine phosphate). This chain is Taurocyamine kinase, found in Schistosoma mansoni (Blood fluke).